The primary structure comprises 1371 residues: uncharacterized protein (1371 aa).

The segment at 1020–1048 (WYLSSSKNTPEPRPDPEPTPEGHDNNLRP) is disordered. A compositionally biased stretch (basic and acidic residues) spans 1029-1046 (PEPRPDPEPTPEGHDNNL). The Autotransporter domain maps to 1083 to 1371 (GEPKATSMWM…SAMLGVKYTF (289 aa)).

It is found in the cell outer membrane. This is an uncharacterized protein from Escherichia coli (strain K12).